A 196-amino-acid chain; its full sequence is NADH dehydrogenase [ubiquinone] 1 alpha subcomplex assembly factor 3 (196 aa).

The transit peptide at 1–93 (MIARTLRTVG…RSVLSWNVNS (93 aa)) directs the protein to the mitochondrion.

This sequence belongs to the NDUFAF3 family. As to quaternary structure, together with NdufAF4 associates with mitochondrial complex I assembly intermediates during its biogenesis.

The protein resides in the mitochondrion. Its function is as follows. Involved in the assembly of mitochondrial NADH:ubiquinone oxidoreductase complex (complex I). Together with NdufAF4, involved in biogenesis of complex 1 modules N, Q and P-peripheral, but not the P-distal module. Required for recruitment of the complex I assembly factor Timmdc1 to complex 1 assembly intermediates. This chain is NADH dehydrogenase [ubiquinone] 1 alpha subcomplex assembly factor 3, found in Drosophila melanogaster (Fruit fly).